A 579-amino-acid chain; its full sequence is Golvesin (579 aa).

The tract at residues 1 to 75 (MTSVNEHSLL…NNNNNNNNNN (75 aa)) is required for targeting to the plasma membrane. Residues 1–79 (MTSVNEHSLL…NNNNNNSNTG (79 aa)) form a disordered region. Residues 1-94 (MTSVNEHSLL…KKKKWNFRKK (94 aa)) lie on the Lumenal side of the membrane. A compositionally biased stretch (low complexity) spans 11-77 (INNNENNDNN…NNNNNNNNSN (67 aa)). A helical; Signal-anchor for type III membrane protein transmembrane segment spans residues 95–115 (ILPMIVILIITAIVVCLVVFS). The required for membrane targeting stretch occupies residues 95–118 (ILPMIVILIITAIVVCLVVFSLPF). The Cytoplasmic portion of the chain corresponds to 116–578 (LPFDSSNTIY…SNDFVIAESP (463 aa)). Positions 559 to 579 (WPSSKGIPGFSNDFVIAESPE) are required for transfer to endosomes and contractile vacuoles; the protein is trapped in the Golgi.

It is found in the contractile vacuole membrane. Its subcellular location is the endosome membrane. The protein resides in the golgi apparatus membrane. The sequence is that of Golvesin (gol) from Dictyostelium discoideum (Social amoeba).